Here is a 723-residue protein sequence, read N- to C-terminus: ATP-dependent zinc metalloprotease YME1 homolog (723 aa).

A helical transmembrane segment spans residues Leu198–Val220. An ATP-binding site is contributed by Gly288–Thr295. Residue His509 participates in Zn(2+) binding. Glu510 is an active-site residue. The Zn(2+) site is built by His513 and Asp587.

In the N-terminal section; belongs to the AAA ATPase family. It in the C-terminal section; belongs to the peptidase M41 family. The cofactor is Zn(2+).

It localises to the mitochondrion inner membrane. The protein resides in the mitochondrion. ATP-dependent metalloprotease that catalyzes the degradation of folded and unfolded proteins with a suitable degron sequence in the mitochondrial intermembrane region. Plays an important role in regulating mitochondrial morphology and function. This is ATP-dependent zinc metalloprotease YME1 homolog (ymel-1) from Caenorhabditis elegans.